The primary structure comprises 1400 residues: MKDLLGLLKSQGQSDEFDAIRIGLASPDMIRSWSYGEVKKPETINYRTFKPERDGLFCAKIFGPIKDYECLCGKYKRLKHRGVICEKCGVEVALSKVRRERMGHIELASPVAHIWFLKSLPSRIGLILDMTLRDIERVLYFESFIVIDPGMTTLDKGQLLNDEQYFEALEEFGDEFDARMGAEAVQMLLRDLDMPVEINSMREELNSTNSETRIKKLSKRLKLVEAFYHSGNNPEWMVLDVLPVLPPDLRPLVPLEGGRFATSDLNDLYRRVINRNNRLKRLLELSAPDIIVRNEKRMLQESVDALLDNGRRGRAITGSNKRPLKSLADMIKGKQGRFRQNLLGKRVDYSGRSVITVGPSLRLHQCGLPKKMALELFKPFIFSKLELRGMATTIKAAKKMVERETPEVWDILDEVIREHPVMLNRAPTLHRLGIQAFEPMLIEGKAIQLHPLVCAAYNADFDGDQMAVHVPLTIEAQLEARALMMSTNNILSPANGEPIIVPSQDVVLGLYYMTREKINAKGEGMAFSDIKEVHRAYGAKQVELHAKVKVRISQVDTTLDGDKVPSTFIADTTVGRALLFDIVPDGLPFSVVNQTMKKKAISNLINECYRKVGLKESCIFADQLMYTGFAYATASGSSVGVDDFVIPPEKAAIIAKAEAEVKEIEYQYADGLVTQGEKYNKVIDLWSRTNETVTEAMMKNLAKEMTVNKAGETVEQQSFNSVYMMADSGARGSVAQMRQLGGMRGLMAKPDGSIIETPITANFREGLSVLQYFTSTHGARKGLADTALKTANSGYLTRRLVDVAQDLVITEVDCGSTNGISVAAMIEGGDVVVPLGHRVLGRVVAQDVIDGKGDFVLAAGTLIDEHDVRTIEAAGVDEMIIRSVITCNTRHGVCAKCYGRDLARGHQVNIGEAIGVVAAQSIGEPGTQLTMRTFHIGGAASRASAIDSVQVKSAGTVRFNKMKSIERHTGHLVVASRSSELAIADEAGREKERYKLPYGAVLSVREGDQVTAGQIVANWDPHTHPIVSEMEGRLEFSGMEENVTIRRQSDEMTGLTTIEVMEMRDRPAAGKDIRPMIAVVDAEGNPVLIPGTESPVQYMLPEKALLSLDHGATVKSGEVLARIPQESIGNKDITGGLPRVADLFEARRPKDPAVMAETSGVVSFGKETKGKIRLVITPQNGDEPVETLIPKWRQINIFDGEEVAKGEIIADGPLSPHDILRLQGVEALADYITNEVQEVYRLQGVVINDKHIEVIVNQMLRKVEVGESGDTDLIQGDQVEYTHLLDANEKAEAEGKFPAKFERVLLGITKASLATESFISAASFQETTRVLTEGAVTGKKDHLRGLKENVVVGRLIPAGTGLAYHNERKRKKELALAAKEGSSTVSASDVEEALSAALKD.

Positions 70, 72, 85, and 88 each coordinate Zn(2+). The Mg(2+) site is built by Asp-460, Asp-462, and Asp-464. Positions 814, 887, 894, and 897 each coordinate Zn(2+).

This sequence belongs to the RNA polymerase beta' chain family. In terms of assembly, the RNAP catalytic core consists of 2 alpha, 1 beta, 1 beta' and 1 omega subunit. When a sigma factor is associated with the core the holoenzyme is formed, which can initiate transcription. It depends on Mg(2+) as a cofactor. Zn(2+) is required as a cofactor.

It carries out the reaction RNA(n) + a ribonucleoside 5'-triphosphate = RNA(n+1) + diphosphate. Functionally, DNA-dependent RNA polymerase catalyzes the transcription of DNA into RNA using the four ribonucleoside triphosphates as substrates. The protein is DNA-directed RNA polymerase subunit beta' of Marinomonas sp. (strain MWYL1).